Here is a 62-residue protein sequence, read N- to C-terminus: Photosystem II reaction center protein Z (62 aa).

The next 2 membrane-spanning stretches (helical) occupy residues 8–28 (AVFA…VVFA) and 41–61 (FSGT…NSLI).

The protein belongs to the PsbZ family. As to quaternary structure, PSII is composed of 1 copy each of membrane proteins PsbA, PsbB, PsbC, PsbD, PsbE, PsbF, PsbH, PsbI, PsbJ, PsbK, PsbL, PsbM, PsbT, PsbY, PsbZ, Psb30/Ycf12, at least 3 peripheral proteins of the oxygen-evolving complex and a large number of cofactors. It forms dimeric complexes.

The protein resides in the plastid. The protein localises to the chloroplast thylakoid membrane. Functionally, may control the interaction of photosystem II (PSII) cores with the light-harvesting antenna, regulates electron flow through the 2 photosystem reaction centers. PSII is a light-driven water plastoquinone oxidoreductase, using light energy to abstract electrons from H(2)O, generating a proton gradient subsequently used for ATP formation. The protein is Photosystem II reaction center protein Z of Cucumis sativus (Cucumber).